The sequence spans 353 residues: Photosystem II D2 protein (353 aa).

Thr-2 carries the post-translational modification N-acetylthreonine. Thr-2 is modified (phosphothreonine). A helical transmembrane segment spans residues Cys-41 to Thr-61. Chlorophyll a is bound at residue His-118. A helical transmembrane segment spans residues Gly-125–Pro-141. Residues Gln-130 and Asn-143 each contribute to the pheophytin a site. A helical transmembrane segment spans residues Val-153–Ser-166. His-198 is a binding site for chlorophyll a. A helical transmembrane segment spans residues Ala-208–Asp-228. 2 residues coordinate a plastoquinone: His-215 and Phe-262. His-215 is a Fe cation binding site. His-269 contacts Fe cation. The chain crosses the membrane as a helical span at residues Gly-279–Arg-295.

It belongs to the reaction center PufL/M/PsbA/D family. PSII is composed of 1 copy each of membrane proteins PsbA, PsbB, PsbC, PsbD, PsbE, PsbF, PsbH, PsbI, PsbJ, PsbK, PsbL, PsbM, PsbT, PsbX, PsbY, PsbZ, Psb30/Ycf12, at least 3 peripheral proteins of the oxygen-evolving complex and a large number of cofactors. It forms dimeric complexes. It depends on The D1/D2 heterodimer binds P680, chlorophylls that are the primary electron donor of PSII, and subsequent electron acceptors. It shares a non-heme iron and each subunit binds pheophytin, quinone, additional chlorophylls, carotenoids and lipids. There is also a Cl(-1) ion associated with D1 and D2, which is required for oxygen evolution. The PSII complex binds additional chlorophylls, carotenoids and specific lipids. as a cofactor.

The protein resides in the plastid. The protein localises to the chloroplast thylakoid membrane. The enzyme catalyses 2 a plastoquinone + 4 hnu + 2 H2O = 2 a plastoquinol + O2. Photosystem II (PSII) is a light-driven water:plastoquinone oxidoreductase that uses light energy to abstract electrons from H(2)O, generating O(2) and a proton gradient subsequently used for ATP formation. It consists of a core antenna complex that captures photons, and an electron transfer chain that converts photonic excitation into a charge separation. The D1/D2 (PsbA/PsbD) reaction center heterodimer binds P680, the primary electron donor of PSII as well as several subsequent electron acceptors. D2 is needed for assembly of a stable PSII complex. The protein is Photosystem II D2 protein of Populus trichocarpa (Western balsam poplar).